The following is a 249-amino-acid chain: Type I iodothyronine deiodinase (249 aa).

The Extracellular portion of the chain corresponds to 1-12 (MELPLPGLWLKR). The helical; Signal-anchor for type III membrane protein transmembrane segment at 13–33 (LWVLFQVALHVAMGKVLMTLF) threads the bilayer. Over 34–249 (PGRVKQDILA…VRAVLEKLHS (216 aa)) the chain is Cytoplasmic. Sec-126 is an active-site residue. Residue Sec-126 is a non-standard amino acid, selenocysteine.

This sequence belongs to the iodothyronine deiodinase family. As to quaternary structure, predominantly monomer. Can form homodimers but homodimerization is not essential for enzyme activity.

The protein resides in the cell membrane. The protein localises to the endoplasmic reticulum membrane. It localises to the basolateral cell membrane. It carries out the reaction 3,3',5-triiodo-L-thyronine + iodide + A + H(+) = L-thyroxine + AH2. The catalysed reaction is 3,3',5'-triiodo-L-thyronine + iodide + A + H(+) = L-thyroxine + AH2. The enzyme catalyses 3,3'-diiodo-L-thyronine + iodide + A + H(+) = 3,3',5'-triiodo-L-thyronine + AH2. It catalyses the reaction 3,3'-diiodo-L-thyronine + iodide + A + H(+) = 3,3',5-triiodo-L-thyronine + AH2. It carries out the reaction 3'-iodo-L-thyronine + iodide + A + H(+) = 3',5'-diiodo-L-thyronine + AH2. The catalysed reaction is 3-iodo-L-thyronine + iodide + A + H(+) = 3,5-diiodo-L-thyronine + AH2. The enzyme catalyses 3-iodo-L-thyronine + iodide + A + H(+) = 3,3'-diiodo-L-thyronine + AH2. It catalyses the reaction 3,3'-diiodothyronamine + iodide + A + H(+) = 3,3',5'-triiodothyronamine + AH2. It carries out the reaction 3'-iodothyronamine + iodide + A + H(+) = 3',5'-diiodothyronamine + AH2. The catalysed reaction is 3-iodothyronamine + iodide + A + H(+) = 3,3'-diiodothyronamine + AH2. The enzyme catalyses 3,3'-diiodothyronamine + iodide + A + H(+) = 3,3',5-triiodothyronamine + AH2. It catalyses the reaction 3-iodothyronamine + iodide + A + H(+) = 3,5-diiodothyronamine + AH2. It carries out the reaction 3,3'-diiodo-L-thyronine sulfate + iodide + A + H(+) = 3,3',5'-triiodo-L-thyronine sulfate + AH2. The catalysed reaction is 3,3',5'-triiodo-L-thyronine sulfate + iodide + A + H(+) = L-thyroxine sulfate + AH2. The enzyme catalyses 3,3'-diiodo-L-thyronine sulfate + iodide + A + H(+) = 3,3',5-triiodo-L-thyronine sulfate + AH2. In terms of biological role, plays a crucial role in the metabolism of thyroid hormones (TH) and has specific roles in TH activation and inactivation by deiodination. Catalyzes the deiodination of L-thyroxine (T4) to 3,5,3'-triiodothyronine (T3) and 3,3',5'-triiodothyronine (rT3) to 3,3'-diiodothyronine (3,3'-T2) via outer-ring deiodination (ORD). Catalyzes the deiodination of T4 to rT3, T3 to 3,3'-T2, 3,5-diiodothyronine (3,5-T2) to 3-monoiodothyronine (3-T1) and 3,3'-T2 to 3-T1 via inner-ring deiodination (IRD). Catalyzes the deiodination of 3',5'-diiodothyronine (3',5'-T2) to 3'-monoiodothyronine (3'-T1) via ORD. Catalyzes the phenolic ring deiodinations of 3,3',5'-triiodothyronamine, 3',5'-diiodothyronamine and 3,3'-diiodothyronamine as well as tyrosyl ring deiodinations of 3,5,3'-triiodothyronamine and 3,5-diiodothyronamine. Catalyzes the deiodination of L-thyroxine sulfate and 3,3',5-triiodo-L-thyronine sulfate via IRD and of 3,3',5'-triiodo-L-thyronine sulfate via ORD. This Sus scrofa (Pig) protein is Type I iodothyronine deiodinase (DIO1).